A 446-amino-acid chain; its full sequence is MSKRPGDLACDLERSLPALASLGTSLSHSQSLSSHFIPPPLEKRRAISDVRRTFCLFVTFDLLFISLLWIIELNTNTGIRKNLEQEVIHYSFQSSFFDIFVLAFFRFSGLLLGYAVLRLQHWWVIAVTTLVSSAFLIVKVILSELLSKGAFGYLLPIVSFVLAWLETWFLDFKVLPQEAEEERWYLAAQAAVARGPLLFSGALSEGQFYSPPESFAGSDNESDEEVTGKKSFSAQEREYIRQGKEATAVVDQILAQEENWKFERSNEYGDTVYTIEVPFHGKTFILKTFLPCPAELVYQEVILQPERMVLWNKTVTACQILQRVEDNTLVSYDVSSGAAGGVVSPRDFVNVRRIERRRDRYLSSGIATTHCSKPPTHKYVRGENGPGGFIVLKSANNPRVCTFVWILNTDLKGRLPRYLIHQSLGATMFEFAFHLRQRVGELGARA.

Residues 1-52 (MSKRPGDLACDLERSLPALASLGTSLSHSQSLSSHFIPPPLEKRRAISDVRR) lie on the Cytoplasmic side of the membrane. The 172-residue stretch at 47-218 (ISDVRRTFCL…YSPPESFAGS (172 aa)) folds into the MENTAL domain. A helical transmembrane segment spans residues 53-73 (TFCLFVTFDLLFISLLWIIEL). Residues 74 to 95 (NTNTGIRKNLEQEVIHYSFQSS) are Extracellular-facing. Residues 96–116 (FFDIFVLAFFRFSGLLLGYAV) form a helical membrane-spanning segment. The Cytoplasmic portion of the chain corresponds to 117–121 (LRLQH). The helical transmembrane segment at 122-142 (WWVIAVTTLVSSAFLIVKVIL) threads the bilayer. Residues 143-149 (SELLSKG) are Extracellular-facing. The chain crosses the membrane as a helical span at residues 150–170 (AFGYLLPIVSFVLAWLETWFL). The Cytoplasmic segment spans residues 171 to 446 (DFKVLPQEAE…QRVGELGARA (276 aa)). The FFAT signature appears at 207–213 (QFYSPPE). Phosphoserine is present on residues S210, S218, and S222. The 214-residue stretch at 231–444 (SFSAQEREYI…LRQRVGELGA (214 aa)) folds into the START domain.

The protein belongs to the STARD3 family. In terms of assembly, homodimer. Interacts (via the MENTAL domain) with STARD3NL. Interacts (via phosphorylated FFAT motif) with VAPA (via MSP domain). Interacts (via phosphorylated FFAT motif) with VAPB (via MSP domain). Interacts (via phosphorylated FFAT motif) with MOSPD2 (via MSP domain); this interaction allows enrichment of MOSPD2 around endosomes. In terms of processing, phosphorylation at Ser-210 is necessary and sufficient for the direct interaction of the phosphorylated FFAT motif with the MSP domain of MOSPD2, VAPA and VAPB and allows the tethering of two membranes that participates in the formation of ER-endosome contacts. Phosphorylation of the FFAT motif leads to conformation changes. Additional phosphorylations around the core FFAT motif (QFYSPPE) are not essential but strengthen the interaction with MOSPD2, VAPA and VAPB. Phosphorylation at Ser-210 of FFAT motif drives membrane tethering between the endoplasmic reticulum and late endosomes via interaction with VAPA and VAPB that in turn allows the efficient transport of sterol mediated by the START domain.

The protein resides in the late endosome membrane. The enzyme catalyses cholesterol(in) = cholesterol(out). Its function is as follows. Sterol-binding protein that mediates cholesterol transport from the endoplasmic reticulum to endosomes. The sterol transport mechanism is triggered by phosphorylation of FFAT motif that leads to membrane tethering between the endoplasmic reticulum and late endosomes via interaction with VAPA and VAPB. Acts as a lipid transfer protein that redirects sterol to the endosome at the expense of the cell membrane and favors membrane formation inside endosomes. May also mediate cholesterol transport between other membranes, such as mitochondria membrane or cell membrane. However, such results need additional experimental evidences; probably mainly mediates cholesterol transport from the endoplasmic reticulum to endosomes. Does not activate transcriptional cholesterol sensing. Able to bind other lipids, such as lutein, a xanthophyll carotenoids that form the macular pigment of the retina. In Mus musculus (Mouse), this protein is StAR-related lipid transfer protein 3.